The chain runs to 498 residues: ATP synthase subunit beta, chloroplastic (498 aa).

172–179 (GGAGVGKT) contributes to the ATP binding site.

The protein belongs to the ATPase alpha/beta chains family. In terms of assembly, F-type ATPases have 2 components, CF(1) - the catalytic core - and CF(0) - the membrane proton channel. CF(1) has five subunits: alpha(3), beta(3), gamma(1), delta(1), epsilon(1). CF(0) has four main subunits: a(1), b(1), b'(1) and c(9-12).

The protein resides in the plastid. It is found in the chloroplast thylakoid membrane. The catalysed reaction is ATP + H2O + 4 H(+)(in) = ADP + phosphate + 5 H(+)(out). In terms of biological role, produces ATP from ADP in the presence of a proton gradient across the membrane. The catalytic sites are hosted primarily by the beta subunits. The polypeptide is ATP synthase subunit beta, chloroplastic (Nandina domestica (Heavenly bamboo)).